The following is a 294-amino-acid chain: Halotolerance protein HAL1 (294 aa).

The disordered stretch occupies residues 115–153; it reads LKRGTKEQEDINSSTSKKSAVINNFSGEKTPNPRPQSSN. Residues 125-153 show a composition bias toward polar residues; sequence INSSTSKKSAVINNFSGEKTPNPRPQSSN. Ser266 is subject to Phosphoserine.

The protein resides in the cytoplasm. Its function is as follows. Involved in salt tolerance. The polypeptide is Halotolerance protein HAL1 (HAL1) (Saccharomyces cerevisiae (strain ATCC 204508 / S288c) (Baker's yeast)).